The following is a 152-amino-acid chain: Cell division protein SepF (152 aa).

Positions 23–32 (EVAREPEPMQ) are enriched in basic and acidic residues. The segment at 23–42 (EVAREPEPMQKKTKKEKPSK) is disordered.

It belongs to the SepF family. As to quaternary structure, homodimer. Interacts with FtsZ.

The protein resides in the cytoplasm. Functionally, cell division protein that is part of the divisome complex and is recruited early to the Z-ring. Probably stimulates Z-ring formation, perhaps through the cross-linking of FtsZ protofilaments. Its function overlaps with FtsA. In Listeria innocua serovar 6a (strain ATCC BAA-680 / CLIP 11262), this protein is Cell division protein SepF.